A 97-amino-acid polypeptide reads, in one-letter code: Putative CC-type chemokine U83 (97 aa).

2 disulfide bridges follow: C32–C62 and C33–C76.

The protein belongs to the intercrine beta (chemokine CC) family. Highly divergent.

The chain is Putative CC-type chemokine U83 (U83) from Homo sapiens (Human).